A 353-amino-acid chain; its full sequence is Ferredoxin--NADP reductase 1 (353 aa).

Positions 14, 33, 41, 46, 86, 121, 289, and 330 each coordinate FAD.

This sequence belongs to the ferredoxin--NADP reductase type 2 family. In terms of assembly, homodimer. It depends on FAD as a cofactor.

The enzyme catalyses 2 reduced [2Fe-2S]-[ferredoxin] + NADP(+) + H(+) = 2 oxidized [2Fe-2S]-[ferredoxin] + NADPH. This chain is Ferredoxin--NADP reductase 1, found in Christiangramia forsetii (strain DSM 17595 / CGMCC 1.15422 / KT0803) (Gramella forsetii).